Consider the following 56-residue polypeptide: MRDECYQVYLELKKILDKAMECLNDEDFQLLLVTMIAKATLTKVEKNDLQRRIPNK.

This is an uncharacterized protein from Acidianus convivator (ABV).